A 633-amino-acid polypeptide reads, in one-letter code: Protein BZZ1 (633 aa).

One can recognise an F-BAR domain in the interval 5–271; that stretch reads LSIGNEIKDS…VVKQNKPSLN (267 aa). A coiled-coil region spans residues 138–210; it reads DMVNKKDNIY…INQANRTKDK (73 aa). Phosphoserine is present on residues Ser-327, Ser-463, Ser-472, and Ser-476. The disordered stretch occupies residues 429 to 495; sequence VDSKPSSGGS…KKTTQNSSDD (67 aa). Positions 474 to 493 are enriched in low complexity; that stretch reads NNSIRTTSTNNTKKTTQNSS. 2 consecutive SH3 domains span residues 493 to 555 and 577 to 633; these read SDDG…ISSA and LPVR…SYCK.

Belongs to the BZZ1 family. As to quaternary structure, interacts with LAS17 and MYO5.

The protein localises to the cytoplasm. Its subcellular location is the cytoskeleton. It localises to the actin patch. Plays a role in endocytosis and trafficking to the vacuole. Functions with type I myosins to restore polarity of the actin cytoskeleton after NaCl stress. This Saccharomyces cerevisiae (strain ATCC 204508 / S288c) (Baker's yeast) protein is Protein BZZ1 (BZZ1).